Consider the following 200-residue polypeptide: NADH-quinone oxidoreductase subunit C (200 aa).

It belongs to the complex I 30 kDa subunit family. As to quaternary structure, NDH-1 is composed of 14 different subunits. Subunits NuoB, C, D, E, F, and G constitute the peripheral sector of the complex.

The protein localises to the cell inner membrane. It catalyses the reaction a quinone + NADH + 5 H(+)(in) = a quinol + NAD(+) + 4 H(+)(out). In terms of biological role, NDH-1 shuttles electrons from NADH, via FMN and iron-sulfur (Fe-S) centers, to quinones in the respiratory chain. The immediate electron acceptor for the enzyme in this species is believed to be ubiquinone. Couples the redox reaction to proton translocation (for every two electrons transferred, four hydrogen ions are translocated across the cytoplasmic membrane), and thus conserves the redox energy in a proton gradient. The sequence is that of NADH-quinone oxidoreductase subunit C from Burkholderia multivorans (strain ATCC 17616 / 249).